The primary structure comprises 281 residues: NADPH-dependent 7-cyano-7-deazaguanine reductase (281 aa).

81 to 83 (VES) provides a ligand contact to substrate. 83–84 (SK) serves as a coordination point for NADPH. Cys188 acts as the Thioimide intermediate in catalysis. Residue Asp195 is the Proton donor of the active site. A substrate-binding site is contributed by 227–228 (HE). 256 to 257 (RG) is an NADPH binding site. The segment at 261-281 (INPLRTSHPQGLPRNMRTARQ) is disordered.

Belongs to the GTP cyclohydrolase I family. QueF type 2 subfamily. Homodimer.

The protein resides in the cytoplasm. It catalyses the reaction 7-aminomethyl-7-carbaguanine + 2 NADP(+) = 7-cyano-7-deazaguanine + 2 NADPH + 3 H(+). Its pathway is tRNA modification; tRNA-queuosine biosynthesis. Catalyzes the NADPH-dependent reduction of 7-cyano-7-deazaguanine (preQ0) to 7-aminomethyl-7-deazaguanine (preQ1). The protein is NADPH-dependent 7-cyano-7-deazaguanine reductase of Verminephrobacter eiseniae (strain EF01-2).